Here is a 61-residue protein sequence, read N- to C-terminus: Tryptophyllin-T1 (61 aa).

An N-terminal signal peptide occupies residues 1-22 (MDFLKKSLFLVLFLGLVSISLC). The propeptide occupies 23 to 53 (DEEKRQDDDEASEREEKKEIHEEGNQEERRD). Residues 25-61 (EKRQDDDEASEREEKKEIHEEGNQEERRDRPPSWIPK) are disordered. The span at 36-55 (REEKKEIHEEGNQEERRDRP) shows a compositional bias: basic and acidic residues. Proline 56 bears the 4-hydroxyproline; partial mark.

This sequence belongs to the frog skin active peptide (FSAP) family. Tryptophillin subfamily. Expressed by the skin glands.

The protein localises to the secreted. This Pithecopus azureus (Orange-legged monkey tree frog) protein is Tryptophyllin-T1.